The sequence spans 310 residues: MSLRVTFLGTGGAVPTTERAPSALFVNREGDRLLFDCGEGTQRGMMRFGTGFGIDHLFVSHLHGDHVLGIPGLVQTLGFNDRAEPLTIHCPPGTEDDLHDLVHAVGHDPAFQIRIESVAPGEVALDADGYEVRAFETVHRTKSQGYVLEEDDRPGRFDRPKAEELGVPVGPKFGRLHEGEPVEAEDGSIVEPDQVVGPPRPGRKFVYTADTRPREGTVAVAEDADLLVHDATFADDMEDRARDTAHSTGREAGSVAERAGAKRLALVHISSRYAADASPIRREAREAFDGECLLPDDGDLIEVPFPDADE.

Positions 61, 63, 65, 66, and 139 each coordinate Zn(2+). Catalysis depends on aspartate 65, which acts as the Proton acceptor. Positions glutamate 150–arginine 175 are disordered. The segment covering arginine 153–glutamate 164 has biased composition (basic and acidic residues). Residues aspartate 210 and histidine 268 each contribute to the Zn(2+) site.

It belongs to the RNase Z family. In terms of assembly, homodimer. Requires Zn(2+) as cofactor.

The catalysed reaction is Endonucleolytic cleavage of RNA, removing extra 3' nucleotides from tRNA precursor, generating 3' termini of tRNAs. A 3'-hydroxy group is left at the tRNA terminus and a 5'-phosphoryl group is left at the trailer molecule.. In terms of biological role, zinc phosphodiesterase, which displays some tRNA 3'-processing endonuclease activity. Probably involved in tRNA maturation, by removing a 3'-trailer from precursor tRNA. This Halorubrum lacusprofundi (strain ATCC 49239 / DSM 5036 / JCM 8891 / ACAM 34) protein is Ribonuclease Z.